The primary structure comprises 530 residues: Vesicular acetylcholine transporter (530 aa).

The Cytoplasmic portion of the chain corresponds to 1–33 (MEPTAPTGQARAAATKLSEAVGAALQEPQRQRR). Residues 34–54 (LVLVIVCVALLLDNMLYMVIV) form a helical membrane-spanning segment. Over 55–125 (PIVPDYIAHM…PTESEDVKIG (71 aa)) the chain is Lumenal, vesicle. N-linked (GlcNAc...) asparagine glycans are attached at residues Asn-89 and Asn-96. A helical membrane pass occupies residues 126-146 (VLFASKAILQLLVNPLSGPFI). Topologically, residues 147–152 (DRMSYD) are cytoplasmic. The chain crosses the membrane as a helical span at residues 153-173 (VPLLIGLGVMFASTVMFAFAE). Over 174 to 182 (DYATLFAAR) the chain is Lumenal, vesicle. A helical transmembrane segment spans residues 183 to 203 (SLQGLGSAFADTSGIAMIADK). The Cytoplasmic segment spans residues 204 to 213 (YPEEPERSRA). A helical membrane pass occupies residues 214–234 (LGVALAFISFGSLVAPPFGGI). The Lumenal, vesicle segment spans residues 235 to 242 (LYEFAGKR). The chain crosses the membrane as a helical span at residues 243-263 (VPFLVLAAVSLFDALLLLAVA). Topologically, residues 264–289 (KPFSAAARARANLPVGTPIHRLMLDP) are cytoplasmic. Residues 290-310 (YIAVVAGALTTCNIPLAFLEP) form a helical membrane-spanning segment. Topologically, residues 311–325 (TIATWMKHTMAASEW) are lumenal, vesicle. Residues 326–346 (EMGMVWLPAFVPHVLGVYLTV) traverse the membrane as a helical segment. The Cytoplasmic segment spans residues 347–356 (RLAARYPHLQ). The chain crosses the membrane as a helical span at residues 357 to 377 (WLYGALGLAVIGVSSCVVPAC). At 378–388 (RSFAPLVVSLC) the chain is on the lumenal, vesicle side. The chain crosses the membrane as a helical span at residues 389 to 409 (GLCFGIALVDTALLPTLAFLV). The Cytoplasmic segment spans residues 410–422 (DVRHVSVYGSVYA). Residues 423-443 (IADISYSVAYALGPIVAGHIV) traverse the membrane as a helical segment. The Lumenal, vesicle segment spans residues 444 to 447 (HSLG). Residues 448-468 (FEQLSLGMGLANLLYAPVLLL) traverse the membrane as a helical segment. Over 469 to 530 (LRNVGLLTRS…EDDYNYYSRS (62 aa)) the chain is Cytoplasmic. The segment at 471 to 530 (NVGLLTRSRSERDVLLDEPPQGLYDAVRLREVQGKDGGEPCSPPGPFDGCEDDYNYYSRS) is mediates interaction with SEC14L1. The tract at residues 504–530 (GKDGGEPCSPPGPFDGCEDDYNYYSRS) is disordered.

Belongs to the major facilitator superfamily. Vesicular transporter family. Interacts with SEC14L1. In terms of tissue distribution, high expression in all major cholinergic cell groups, including peripheral postganglionic parasympathetic cells, preganglionic sympathetic and parasympathetic cells, ventral spinal cord and brainstem motoneurons, cell groups in the basal forebrain, the habenula and the corpus striatum. Weakly expressed in the cortex and hippocampus.

It localises to the cytoplasmic vesicle. The protein resides in the secretory vesicle. The protein localises to the synaptic vesicle membrane. The enzyme catalyses acetylcholine(out) + 2 H(+)(in) = acetylcholine(in) + 2 H(+)(out). It catalyses the reaction choline(in) + 2 H(+)(out) = choline(out) + 2 H(+)(in). It carries out the reaction serotonin(in) + 2 H(+)(out) = serotonin(out) + 2 H(+)(in). Potently inhibited by L-vesamicol. Electrogenic antiporter that exchanges one cholinergic neurotransmitter, acetylcholine or choline, with two intravesicular protons across the membrane of synaptic vesicles. Uses the electrochemical proton gradient established by the V-type proton-pump ATPase to store neurotransmitters inside the vesicles prior to their release via exocytosis. Determines cholinergic vesicular quantal size at presynaptic nerve terminals in developing neuro-muscular junctions with an impact on motor neuron differentiation and innervation pattern. Part of forebrain cholinergic system, regulates hippocampal synapse transmissions that underlie spatial memory formation. Can transport serotonin. The chain is Vesicular acetylcholine transporter (Slc18a3) from Rattus norvegicus (Rat).